Here is a 268-residue protein sequence, read N- to C-terminus: LOB domain-containing protein 13 (268 aa).

The region spanning threonine 51–isoleucine 152 is the LOB domain. A disordered region spans residues leucine 191–aspartate 268. Pro residues-rich tracts occupy residues leucine 192 to proline 205 and proline 212 to leucine 222. Positions proline 223–methionine 243 are enriched in low complexity. A compositionally biased stretch (polar residues) spans serine 250–aspartate 268.

The protein belongs to the LOB domain-containing protein family. In terms of tissue distribution, expressed in shoots and roots and at low levels in flowers, but not in leaves or inflorescence stems.

This is LOB domain-containing protein 13 (LBD13) from Arabidopsis thaliana (Mouse-ear cress).